The sequence spans 446 residues: Glucarate dehydratase-related protein (446 aa).

Residues histidine 31, threonine 104, tyrosine 149, and lysine 204 each contribute to the substrate site. Lysine 206 functions as the Proton acceptor in the catalytic mechanism. 3 residues coordinate Mg(2+): aspartate 234, glutamate 265, and asparagine 288. Residue 234–236 (DPN) participates in substrate binding. Residues asparagine 288, 338–340 (HSN), histidine 367, and arginine 421 contribute to the substrate site. Catalysis depends on histidine 338, which acts as the Proton acceptor.

It belongs to the mandelate racemase/muconate lactonizing enzyme family. GlucD subfamily. The cofactor is a divalent metal cation.

In terms of biological role, does not seem to have an in-vivo activity on glucarate or idarate. Its real substrate is unknown. The protein is Glucarate dehydratase-related protein (gudX) of Escherichia coli (strain K12).